A 3332-amino-acid polypeptide reads, in one-letter code: Nonribosomal peptide synthetase imqB (3332 aa).

An adenylation 1 region spans residues 230-622 (FSEQVKAHPG…IGRKDTQVKV (393 aa)). In terms of domain architecture, Carrier 1 spans 764–846 (GRITPQEKLL…DMARCITRVD (83 aa)). Serine 801 carries the post-translational modification O-(pantetheine 4'-phosphoryl)serine. The tract at residues 886–1314 (DIYPCTPLQE…NCLTRKELHQ (429 aa)) is condensation 1. The segment at 1336 to 1740 (EVSNTRPTAP…GRKDRQLKVR (405 aa)) is adenylation 2. One can recognise a Carrier 2 domain in the interval 1880-1954 (AIATPKEEKL…EMAEKAAETG (75 aa)). Serine 1915 carries the post-translational modification O-(pantetheine 4'-phosphoryl)serine. A condensation 2 region spans residues 1992–2402 (EDIYPCTPLQ…CLSEIDTQQI (411 aa)). Positions 2422–2819 (AQQAREHPAT…GRKDTQVKIR (398 aa)) are adenylation 3. The Carrier 3 domain maps to 2963–3039 (EVATNDEAAV…DLASRIGRVE (77 aa)). Serine 3000 carries the O-(pantetheine 4'-phosphoryl)serine modification. A thioesterase (TE) domain region spans residues 3058–3323 (SSNPTLIQGQ…ETTRHIRDFC (266 aa)).

The protein belongs to the NRP synthetase family.

It participates in secondary metabolite biosynthesis. Nonribosomal peptide synthetase; part of the gene cluster that mediates the biosynthesis of imizoquins A to D, tripeptide-derived alkaloids that serve a protective role against oxidative stress that are essential for normal germination. ImqB is a canonical three-module NRPS that assembles the tripeptide backbone of the imizoquins via condensation of Trp, Tyr, and Leu-derived precursors. N-methylation by imqF and phenol oxidation by imqC, followed by cyclization via the FAD-dependent oxidase imqH carry out the three-step transformation of L-tyrosine into tetrahydroisoquinoline. Importantly, this sequence requires the presence of a free amine in the tyrosine moiety, indicating that isoquinoline formation occurs prior to peptide bond formation. The imidazolidin-4-one ring of imizoquins could form following additional oxidation of the methyl-derived bridgehead carbon by imqH. Lastly, O-methylation by imqG and leucine hydroxylation by imqE complete biosynthesis of the imizoquins. The polypeptide is Nonribosomal peptide synthetase imqB (Aspergillus flavus (strain ATCC 200026 / FGSC A1120 / IAM 13836 / NRRL 3357 / JCM 12722 / SRRC 167)).